Reading from the N-terminus, the 502-residue chain is ATP synthase subunit alpha (502 aa).

A disordered region spans residues 114–139; that stretch reads PIDGRGPIETSKTRPIESPAPGVMDR. Position 169–176 (169–176) interacts with ATP; that stretch reads GDRQTGKT.

The protein belongs to the ATPase alpha/beta chains family. As to quaternary structure, F-type ATPases have 2 components, CF(1) - the catalytic core - and CF(0) - the membrane proton channel. CF(1) has five subunits: alpha(3), beta(3), gamma(1), delta(1), epsilon(1). CF(0) has three main subunits: a(1), b(2) and c(9-12). The alpha and beta chains form an alternating ring which encloses part of the gamma chain. CF(1) is attached to CF(0) by a central stalk formed by the gamma and epsilon chains, while a peripheral stalk is formed by the delta and b chains.

The protein resides in the cell membrane. The catalysed reaction is ATP + H2O + 4 H(+)(in) = ADP + phosphate + 5 H(+)(out). Produces ATP from ADP in the presence of a proton gradient across the membrane. The alpha chain is a regulatory subunit. The protein is ATP synthase subunit alpha of Halalkalibacterium halodurans (strain ATCC BAA-125 / DSM 18197 / FERM 7344 / JCM 9153 / C-125) (Bacillus halodurans).